The following is a 58-amino-acid chain: UPF0391 membrane protein OCAR_5266/OCA5_c27040 (58 aa).

Helical transmembrane passes span 4–24 (WVVTFLIIALVAGLLGFGGIA) and 30–50 (IAKIVFFIAIVLFAVSAVVGL).

Belongs to the UPF0391 family.

The protein resides in the cell membrane. This chain is UPF0391 membrane protein OCAR_5266/OCA5_c27040, found in Afipia carboxidovorans (strain ATCC 49405 / DSM 1227 / KCTC 32145 / OM5) (Oligotropha carboxidovorans).